The following is a 551-amino-acid chain: Periplasmic [NiFe] hydrogenase large subunit (551 aa).

Ni(2+)-binding residues include Cys65, Cys68, Cys530, and Cys533. The propeptide occupies 537–551 (VIDPESNQVHKFRIL).

This sequence belongs to the [NiFe]/[NiFeSe] hydrogenase large subunit family. Heterodimer of a large and a small subunit. The cofactor is Ni(2+).

The protein resides in the periplasm. The enzyme catalyses 2 Fe(III)-[cytochrome c3] + H2 = 2 Fe(II)-[cytochrome c3] + 2 H(+). The protein is Periplasmic [NiFe] hydrogenase large subunit (hydB) of Megalodesulfovibrio gigas (Desulfovibrio gigas).